A 201-amino-acid polypeptide reads, in one-letter code: UPF0301 protein RHA1_ro03630 (201 aa).

It belongs to the UPF0301 (AlgH) family.

The sequence is that of UPF0301 protein RHA1_ro03630 from Rhodococcus jostii (strain RHA1).